Consider the following 122-residue polypeptide: Autophagy-related protein 8a (122 aa).

Residues 1–21 (MAKSSFKISNPLEARMSESSR) are disordered. Gly117 carries the Phosphatidylethanolamine amidated glycine lipid modification. Positions 118–122 (SLTVA) are cleaved as a propeptide — removed in mature form.

This sequence belongs to the ATG8 family. As to quaternary structure, interacts with ATG4B. Interacts with NBR1. Post-translationally, the C-terminal 5 residues are removed by ATG4 to expose Gly-117 at the C-terminus. This Gly-117 forms then a thioester bond with the 'Cys-558' of ATG7 (E1-like activating enzyme) before being transferred to the 'Cys-258' of ATG3 (the specific E2 conjugating enzyme), in order to be finally amidated with phosphatidylethanolamine. This lipid modification anchors ATG8 to autophagosomes. As to expression, constitutively expressed.

It is found in the cytoplasmic vesicle. It localises to the autophagosome membrane. Its subcellular location is the vacuole membrane. The protein resides in the cytoplasm. The protein localises to the cytoskeleton. In terms of biological role, ubiquitin-like modifier involved in autophagosomes formation. May mediate the delivery of the autophagosomes to the vacuole via the microtubule cytoskeleton. The sequence is that of Autophagy-related protein 8a (ATG8A) from Arabidopsis thaliana (Mouse-ear cress).